A 693-amino-acid chain; its full sequence is Polyribonucleotide nucleotidyltransferase (693 aa).

Mg(2+) is bound by residues Asp-485 and Asp-491. The 60-residue stretch at 552 to 611 (PRIMVLEINPSKIGDLIGPSGKNIKKIIEETHTTINIKPEGLVYISAPDQESAEKAAQMV) folds into the KH domain. The 71-residue stretch at 621–691 (GDIFLGKVIR…SSGRISLTRK (71 aa)) folds into the S1 motif domain.

This sequence belongs to the polyribonucleotide nucleotidyltransferase family. The cofactor is Mg(2+).

It is found in the cytoplasm. The catalysed reaction is RNA(n+1) + phosphate = RNA(n) + a ribonucleoside 5'-diphosphate. In terms of biological role, involved in mRNA degradation. Catalyzes the phosphorolysis of single-stranded polyribonucleotides processively in the 3'- to 5'-direction. The chain is Polyribonucleotide nucleotidyltransferase from Dictyoglomus thermophilum (strain ATCC 35947 / DSM 3960 / H-6-12).